The sequence spans 173 residues: Coordinator of PRMT5 and differentiation stimulator (173 aa).

M1 is subject to N-acetylmethionine. Positions 1-70 are disordered; the sequence is MDPQAATGRG…EGPSSEEEGF (70 aa). S64 and S65 each carry phosphoserine.

As to quaternary structure, interacts with PRMT5. Interacts with histone H4; specifically interacts with the N-terminus of histone H4 but not with histone H3. Interacts with CBFB. Found in a complex with PRMT5, RUNX1 and CBFB.

Its subcellular location is the nucleus. Histone-binding protein required for histone H4 methyltransferase activity of PRMT5. Specifically required for histone H4 'Arg-3' methylation mediated by PRMT5, but not histone H3 'Arg-8' methylation, suggesting that it modulates the substrate specificity of PRMT5. Specifically interacts with the N-terminus of histone H4 but not with histone H3, suggesting that it acts by promoting the association between histone H4 and PRMT5. Involved in CCNE1 promoter repression. Plays a role in muscle cell differentiation by modulating the recruitment of PRMT5 to the promoter of genes involved in the coordination between cell cycle exit and muscle differentiation. This Mus musculus (Mouse) protein is Coordinator of PRMT5 and differentiation stimulator (Coprs).